A 125-amino-acid chain; its full sequence is 13 kDa ribonucleoprotein-associated protein (125 aa).

The protein belongs to the eukaryotic ribosomal protein eL8 family. Component of the U3 snoRNP particle. Binds to the C'/D and B/C motifs in U3 snoRNA. Component of the 25S U4/U6.U5 tri-snRNP particle, a subcomplex of the spliceosome. Binds to the 5' stem-loop of U4 snRNA.

The protein localises to the nucleus. Its subcellular location is the nucleolus. In terms of biological role, common component of the spliceosome and rRNA processing machinery. In association with the spliceosomal U4/U6.U5 tri-snRNP particle, required for splicing of pre-mRNA. In association with box C/D snoRNPs, required for processing of pre-ribosomal RNA (rRNA) and site-specific 2'-O-methylation of substrate RNAs. Essential for the accumulation and stability of U4 snRNA, U6 snRNA, and box C/D snoRNAs. In Schizosaccharomyces pombe (strain 972 / ATCC 24843) (Fission yeast), this protein is 13 kDa ribonucleoprotein-associated protein (snu13).